Consider the following 317-residue polypeptide: L-lactate dehydrogenase (317 aa).

Residues Val17, Asp38, Lys43, Tyr69, and 83–84 (GA) contribute to the NAD(+) site. Positions 86 and 92 each coordinate substrate. NAD(+)-binding positions include Ser105, 122–124 (ATN), and Ser147. 124-127 (NPVD) lines the substrate pocket. 152-155 (DTAR) provides a ligand contact to substrate. Beta-D-fructose 1,6-bisphosphate is bound by residues Arg157 and His172. The Proton acceptor role is filled by His179. Tyr224 carries the phosphotyrosine modification. Position 233 (Thr233) interacts with substrate.

It belongs to the LDH/MDH superfamily. LDH family. As to quaternary structure, homotetramer.

Its subcellular location is the cytoplasm. The catalysed reaction is (S)-lactate + NAD(+) = pyruvate + NADH + H(+). The protein operates within fermentation; pyruvate fermentation to lactate; (S)-lactate from pyruvate: step 1/1. Allosterically activated by fructose 1,6-bisphosphate (FBP). In terms of biological role, catalyzes the conversion of lactate to pyruvate. The sequence is that of L-lactate dehydrogenase from Bacillus caldotenax.